The chain runs to 279 residues: NADH dehydrogenase [ubiquinone] iron-sulfur protein 3, mitochondrial (279 aa).

A mitochondrion-targeting transit peptide spans 1-27; sequence MISRTLLKRSLPTVQFLRPFTRSSIRR. The segment at 249–279 is disordered; the sequence is EPVGEGKDFTPESFKLPTPEPEPEKESDEKK. The span at 270-279 shows a compositional bias: basic and acidic residues; that stretch reads EPEKESDEKK.

This sequence belongs to the complex I 30 kDa subunit family. Core subunit of respiratory chain NADH dehydrogenase (Complex I).

It is found in the mitochondrion inner membrane. The catalysed reaction is a ubiquinone + NADH + 5 H(+)(in) = a ubiquinol + NAD(+) + 4 H(+)(out). In terms of biological role, core subunit of the mitochondrial membrane respiratory chain NADH dehydrogenase (Complex I) which catalyzes electron transfer from NADH through the respiratory chain, using ubiquinone as an electron acceptor. Plays a role in cell wall integrity and is involved in osmotic and oxidative resistance, yeast to hypha transition and the ability to damage and invade oral epithelial cells. The chain is NADH dehydrogenase [ubiquinone] iron-sulfur protein 3, mitochondrial (ALI1) from Candida albicans (strain SC5314 / ATCC MYA-2876) (Yeast).